Here is an 889-residue protein sequence, read N- to C-terminus: DNA mismatch repair protein MutS (889 aa).

622 to 629 (GPNMAGKS) serves as a coordination point for ATP. The interval 869-889 (QRVKRPEKAPADVTAETEDQE) is disordered.

This sequence belongs to the DNA mismatch repair MutS family.

In terms of biological role, this protein is involved in the repair of mismatches in DNA. It is possible that it carries out the mismatch recognition step. This protein has a weak ATPase activity. This chain is DNA mismatch repair protein MutS, found in Desulfatibacillum aliphaticivorans.